The following is a 4367-amino-acid chain: Dynein heavy chain, cytoplasmic (4367 aa).

Over residues Met-1 to Ser-13 the composition is skewed to pro residues. The segment at Met-1–Ala-20 is disordered. The segment at Met-1 to Asn-1904 is stem. Coiled coils occupy residues Ala-676–Val-693, Ile-1176–Arg-1215, Leu-1327–Leu-1351, Tyr-1557–Val-1574, and Asn-1637–Val-1668. 4 AAA regions span residues Tyr-1905–Ser-2130, Glu-2202–Ala-2460, Glu-2566–Gly-2815, and Thr-2909–Ile-3179. Gly-1943–Thr-1950 serves as a coordination point for ATP. A coiled-coil region spans residues Ala-2195–Ile-2218. ATP-binding positions include Gly-2240–Ser-2247, Gly-2605–Thr-2612, and Gly-2947–Thr-2954. Coiled-coil stretches lie at residues Gln-3193–Ala-3296, Pro-3423–Gln-3481, and Val-3778–Ile-3809. Positions Gln-3193–Gln-3481 are stalk. 2 AAA regions span residues Leu-3565–Ala-3794 and Ala-4003–Thr-4215.

It belongs to the dynein heavy chain family. As to quaternary structure, consists of at least two heavy chains and a number of intermediate and light chains.

The protein localises to the cytoplasm. It localises to the cytoskeleton. Functionally, cytoplasmic dynein acts as a motor for the intracellular retrograde motility of vesicles and organelles along microtubules. Dynein has ATPase activity; the force-producing power stroke is thought to occur on release of ADP. Required to maintain uniform nuclear distribution in hyphae. This chain is Dynein heavy chain, cytoplasmic (ro-1), found in Neurospora crassa (strain ATCC 24698 / 74-OR23-1A / CBS 708.71 / DSM 1257 / FGSC 987).